The following is a 612-amino-acid chain: Sulfite reductase [NADPH] hemoprotein beta-component (612 aa).

The interval 1–26 (MDDHKPIETPDGPAVDTPGIGARRYE) is disordered. The [4Fe-4S] cluster site is built by cysteine 469, cysteine 475, cysteine 514, and cysteine 518. Cysteine 518 lines the siroheme pocket.

It belongs to the nitrite and sulfite reductase 4Fe-4S domain family. As to quaternary structure, alpha(8)-beta(8). The alpha component is a flavoprotein, the beta component is a hemoprotein. Siroheme is required as a cofactor. It depends on [4Fe-4S] cluster as a cofactor.

It catalyses the reaction hydrogen sulfide + 3 NADP(+) + 3 H2O = sulfite + 3 NADPH + 4 H(+). Its pathway is sulfur metabolism; hydrogen sulfide biosynthesis; hydrogen sulfide from sulfite (NADPH route): step 1/1. Component of the sulfite reductase complex that catalyzes the 6-electron reduction of sulfite to sulfide. This is one of several activities required for the biosynthesis of L-cysteine from sulfate. This is Sulfite reductase [NADPH] hemoprotein beta-component from Methylorubrum extorquens (strain ATCC 14718 / DSM 1338 / JCM 2805 / NCIMB 9133 / AM1) (Methylobacterium extorquens).